A 317-amino-acid polypeptide reads, in one-letter code: Dehydrogenase/reductase SDR family member 12 (317 aa).

Residues Ser-50 and Ile-52 each coordinate NAD(+). Substrate is bound at residue Ser-175. Residues Tyr-201, Lys-205, and Thr-234 each coordinate NAD(+). Tyr-201 (proton acceptor) is an active-site residue.

The protein belongs to the short-chain dehydrogenases/reductases (SDR) family.

Its function is as follows. Putative oxidoreductase. This chain is Dehydrogenase/reductase SDR family member 12, found in Homo sapiens (Human).